The following is a 468-amino-acid chain: Cyclin-dependent kinase 14 (468 aa).

Residues serine 24, serine 77, and serine 94 each carry the phosphoserine modification. Residues phenylalanine 102–alanine 131 form a disordered region. Residue serine 133 is modified to Phosphoserine. In terms of domain architecture, Protein kinase spans tyrosine 134–phenylalanine 418. Residues leucine 140 to valine 148 and lysine 163 each bind ATP. The active-site Proton acceptor is aspartate 255. The disordered stretch occupies residues glutamate 448–histidine 468. The segment covering lysine 455–histidine 468 has biased composition (polar residues).

The protein belongs to the protein kinase superfamily. CMGC Ser/Thr protein kinase family. CDC2/CDKX subfamily. Found in a complex with LRP6, CCNY and CAPRIN2 during G2/M stage; CAPRIN2 functions as a scaffold for the complex by binding to CCNY via its N terminus and to CDK14 via its C terminus. Interacts with CCNY; CCNY mediates its recruitment to the plasma membrane and promotes phosphorylation of LRP6. Interacts with CCDN3 and CDKN1A. Interacts with SEPT8. Interacts with 14-3-3 proteina YWHAB, YWHAE, YWHAH and YWHAQ.

It is found in the cell membrane. The protein resides in the cytoplasm. Its subcellular location is the nucleus. It catalyses the reaction L-seryl-[protein] + ATP = O-phospho-L-seryl-[protein] + ADP + H(+). The enzyme catalyses L-threonyl-[protein] + ATP = O-phospho-L-threonyl-[protein] + ADP + H(+). Its activity is regulated as follows. Serine/threonine-protein kinase activity is promoted by associated cyclins CCDN3 and CCNY and repressed by CDKN1A. Its function is as follows. Serine/threonine-protein kinase involved in the control of the eukaryotic cell cycle, whose activity is controlled by an associated cyclin. Acts as a cell-cycle regulator of Wnt signaling pathway during G2/M phase by mediating the phosphorylation of LRP6 at 'Ser-1490', leading to the activation of the Wnt signaling pathway. Acts as a regulator of cell cycle progression and cell proliferation via its interaction with CCDN3. Phosphorylates RB1 in vitro, however the relevance of such result remains to be confirmed in vivo. May also play a role in meiosis, neuron differentiation and may indirectly act as a negative regulator of insulin-responsive glucose transport. The sequence is that of Cyclin-dependent kinase 14 (CDK14) from Oryctolagus cuniculus (Rabbit).